A 422-amino-acid polypeptide reads, in one-letter code: UDP-N-acetylglucosamine 1-carboxyvinyltransferase (422 aa).

22–23 (KN) serves as a coordination point for phosphoenolpyruvate. R92 is a UDP-N-acetyl-alpha-D-glucosamine binding site. C116 functions as the Proton donor in the catalytic mechanism. At C116 the chain carries 2-(S-cysteinyl)pyruvic acid O-phosphothioketal. UDP-N-acetyl-alpha-D-glucosamine is bound by residues 121-125 (RPVDQ), D305, and I327.

It belongs to the EPSP synthase family. MurA subfamily.

Its subcellular location is the cytoplasm. The enzyme catalyses phosphoenolpyruvate + UDP-N-acetyl-alpha-D-glucosamine = UDP-N-acetyl-3-O-(1-carboxyvinyl)-alpha-D-glucosamine + phosphate. It functions in the pathway cell wall biogenesis; peptidoglycan biosynthesis. Its function is as follows. Cell wall formation. Adds enolpyruvyl to UDP-N-acetylglucosamine. The polypeptide is UDP-N-acetylglucosamine 1-carboxyvinyltransferase (Sorangium cellulosum (strain So ce56) (Polyangium cellulosum (strain So ce56))).